Reading from the N-terminus, the 170-residue chain is Arginine repressor (170 aa).

It belongs to the ArgR family.

It is found in the cytoplasm. Its pathway is amino-acid biosynthesis; L-arginine biosynthesis [regulation]. In terms of biological role, regulates arginine biosynthesis genes. The sequence is that of Arginine repressor from Bifidobacterium longum (strain DJO10A).